We begin with the raw amino-acid sequence, 361 residues long: Molybdopterin synthase catalytic subunit (361 aa).

Residues 101–102 (HR), Lys-117, and 124–126 (KKE) each bind substrate.

Belongs to the MoaE family. MOCS2B subfamily. As to quaternary structure, heterotetramer; composed of 2 small (Mocs2A) and 2 large (Mocs2B) subunits.

The protein resides in the cytoplasm. The catalysed reaction is 2 [molybdopterin-synthase sulfur-carrier protein]-C-terminal-Gly-aminoethanethioate + cyclic pyranopterin phosphate + H2O = molybdopterin + 2 [molybdopterin-synthase sulfur-carrier protein]-C-terminal Gly-Gly + 2 H(+). Its pathway is cofactor biosynthesis; molybdopterin biosynthesis. Functionally, catalytic subunit of the molybdopterin synthase complex, a complex that catalyzes the conversion of precursor Z into molybdopterin. Acts by mediating the incorporation of 2 sulfur atoms from thiocarboxylated Mocs2A into precursor Z to generate a dithiolene group. The chain is Molybdopterin synthase catalytic subunit from Drosophila pseudoobscura pseudoobscura (Fruit fly).